We begin with the raw amino-acid sequence, 420 residues long: Hemojuvelin (420 aa).

A signal peptide spans 1 to 32; it reads MGQSPSPRSPHGSPPTLSTLTLLLLLCGQAHS. A Phosphotyrosine modification is found at Tyr-43. Asn-111 carries N-linked (GlcNAc...) asparagine glycosylation. A disordered region spans residues 113-135; sequence SRQGPTAPPPARGPALPGAGPAP. Residues 125–134 show a composition bias toward low complexity; that stretch reads GPALPGAGPA. 2 disulfides stabilise this stretch: Cys-141–Cys-223 and Cys-160–Cys-310. N-linked (GlcNAc...) asparagine glycosylation is found at Asn-206 and Asn-365. Residue Asp-393 is the site of GPI-anchor amidated aspartate attachment. A propeptide spans 394-420 (removed in mature form); sequence AGPPLSPAICLVPLLSALFVLWLCFSK.

The protein belongs to the repulsive guidance molecule (RGM) family. As to quaternary structure, interacts with BMP2 and BMP4. Interacts with BMP6. Interacts with BMPR1B. Interacts with TMPRSS6. Post-translationally, autocatalytically cleaved at low pH; the two chains remain linked via two disulfide bonds. Also proteolytically processed by TMPRSS6, several fragments being released in the extracellular space; regulates HJV activity in BMP signaling and thefore iron homeostasis. In terms of tissue distribution, muscle cell lineage.

The protein resides in the cell membrane. Acts as a bone morphogenetic protein (BMP) coreceptor. Through enhancement of BMP signaling regulates hepcidin (HAMP) expression and regulates iron homeostasis. In Mus musculus (Mouse), this protein is Hemojuvelin.